A 345-amino-acid chain; its full sequence is Dimethyladenosine transferase 1, mitochondrial (345 aa).

A mitochondrion-targeting transit peptide spans 1–27 (MAASGKLGTFRLPPLPTIREIIKLFGL). Leu38, Gly63, Glu85, Lys86, Asp111, Val112, and Asn141 together coordinate S-adenosyl-L-methionine.

The protein belongs to the class I-like SAM-binding methyltransferase superfamily. rRNA adenine N(6)-methyltransferase family. KsgA subfamily. Interacts with mitochondrial RNA polymerase POLRMT. Interacts with TFAM. Remains bound to the maturing mtSSU until the late stages of assembly. As to expression, ubiquitously expressed.

It localises to the mitochondrion. The enzyme catalyses adenosine(N)/adenosine(N+1) in rRNA + 4 S-adenosyl-L-methionine = N(6)-dimethyladenosine(N)/N(6)-dimethyladenosine(N+1) in rRNA + 4 S-adenosyl-L-homocysteine + 4 H(+). Functionally, mitochondrial methyltransferase which uses S-adenosyl methionine to dimethylate two highly conserved adjacent adenosine residues (A1006 and A1007) within the loop of helix 45 at the 3-prime end of 12S rRNA, thereby regulating the assembly or stability of the small subunit of the mitochondrial ribosome. Also required for basal transcription of mitochondrial DNA, probably via its interaction with POLRMT and TFAM. Stimulates transcription independently of the methyltransferase activity. This is Dimethyladenosine transferase 1, mitochondrial (Tfb1m) from Mus musculus (Mouse).